Reading from the N-terminus, the 180-residue chain is MRILGIDPGLRVTGFGVIDQSGHQLTYVTSGVIKTADADLPTRLGTIFEGISTLIRQHAPDHSAIEKVFVNVNPQSTLLLGQARGAAICGLVSGGVPVAEYTALQLKQAVVGYGRATKEQMQQMVVRLLCLSGIPSTDAADALGMAICHAHGGGTLSTLGGIAPGLAKKGLRVRRGRLVG.

Catalysis depends on residues Asp-7, Glu-66, and Asp-138. Residues Asp-7, Glu-66, and Asp-138 each contribute to the Mg(2+) site.

Belongs to the RuvC family. As to quaternary structure, homodimer which binds Holliday junction (HJ) DNA. The HJ becomes 2-fold symmetrical on binding to RuvC with unstacked arms; it has a different conformation from HJ DNA in complex with RuvA. In the full resolvosome a probable DNA-RuvA(4)-RuvB(12)-RuvC(2) complex forms which resolves the HJ. The cofactor is Mg(2+).

Its subcellular location is the cytoplasm. The catalysed reaction is Endonucleolytic cleavage at a junction such as a reciprocal single-stranded crossover between two homologous DNA duplexes (Holliday junction).. In terms of biological role, the RuvA-RuvB-RuvC complex processes Holliday junction (HJ) DNA during genetic recombination and DNA repair. Endonuclease that resolves HJ intermediates. Cleaves cruciform DNA by making single-stranded nicks across the HJ at symmetrical positions within the homologous arms, yielding a 5'-phosphate and a 3'-hydroxyl group; requires a central core of homology in the junction. The consensus cleavage sequence is 5'-(A/T)TT(C/G)-3'. Cleavage occurs on the 3'-side of the TT dinucleotide at the point of strand exchange. HJ branch migration catalyzed by RuvA-RuvB allows RuvC to scan DNA until it finds its consensus sequence, where it cleaves and resolves the cruciform DNA. The polypeptide is Crossover junction endodeoxyribonuclease RuvC (Paraburkholderia phymatum (strain DSM 17167 / CIP 108236 / LMG 21445 / STM815) (Burkholderia phymatum)).